Reading from the N-terminus, the 471-residue chain is Proline and serine-rich protein 2 (471 aa).

2 disordered regions span residues 1–46 and 82–247; these read MPGN…SFTM and CDSG…GDHV. Positions 26-43 are enriched in low complexity; sequence LSRGGSLESRCSSSRSRS. Position 43 is a phosphoserine (Ser-43). At Thr-45 the chain carries Phosphothreonine. A compositionally biased stretch (low complexity) spans 90-101; that stretch reads SPQSLEESPSSH. Residues 154 to 177 are compositionally biased toward pro residues; the sequence is LPPPDSRGPEVFPLPPSLPVPAPS. Ser-187, Ser-220, and Ser-223 each carry phosphoserine. Arg-263 carries the asymmetric dimethylarginine; alternate modification. Arg-263 is modified (omega-N-methylarginine; alternate). Disordered stretches follow at residues 310 to 365 and 383 to 437; these read DTSS…TEQP and PSSF…RAVG. Over residues 313 to 324 the composition is skewed to basic and acidic residues; that stretch reads SEERWQKAEEQR. Composition is skewed to polar residues over residues 354–364 and 383–393; these read AQQSRAVQTEQ and PSSFVPTSKTI. The span at 415-427 shows a compositional bias: basic and acidic residues; that stretch reads YEPRPDGSQDARK. Residue Ser-431 is modified to Phosphoserine. Arg-450 carries the omega-N-methylarginine modification.

In Mus musculus (Mouse), this protein is Proline and serine-rich protein 2 (Proser2).